We begin with the raw amino-acid sequence, 1182 residues long: Exocyst complex component 4 (1182 aa).

Low complexity predominate over residues Asn-236 to Ser-250. Disordered regions lie at residues Asn-236–Pro-262, Ile-376–Ile-427, Glu-525–Thr-545, and Gln-921–Asn-968. Positions Gly-392 to Gly-409 are enriched in gly residues. Residues Asn-410–Asn-426 are compositionally biased toward low complexity. The segment covering Gln-921 to Gln-932 has biased composition (low complexity). The span at Val-933–Asn-968 shows a compositional bias: polar residues.

This sequence belongs to the SEC8 family. As to quaternary structure, the exocyst complex is composed of sec3/exoc1, sec5/exoc2, sec6/exoc3, sec8/exoc4, sec10/exoc5, sec15/exoc6, exo70/exoc7 and exo84/exoc8.

The protein localises to the midbody. Its subcellular location is the midbody ring. It is found in the cell projection. It localises to the cytoplasm. The protein resides in the cytoskeleton. The protein localises to the microtubule organizing center. Its subcellular location is the centrosome. Functionally, component of the exocyst complex involved in the docking of exocytic vesicles with fusion sites on the plasma membrane. This chain is Exocyst complex component 4 (exoc4), found in Dictyostelium discoideum (Social amoeba).